A 348-amino-acid polypeptide reads, in one-letter code: uncharacterized protein (348 aa).

NADP(+) is bound by residues K41 and Y170. Phosphoserine is present on S339.

It belongs to the NAD(P)-dependent epimerase/dehydratase family. Dihydroflavonol-4-reductase subfamily.

This is an uncharacterized protein from Saccharomyces cerevisiae (strain ATCC 204508 / S288c) (Baker's yeast).